The following is a 114-amino-acid chain: NAD(P)H-quinone oxidoreductase subunit M (114 aa).

It belongs to the complex I NdhM subunit family. As to quaternary structure, NDH-1 can be composed of about 15 different subunits; different subcomplexes with different compositions have been identified which probably have different functions.

It is found in the cellular thylakoid membrane. The catalysed reaction is a plastoquinone + NADH + (n+1) H(+)(in) = a plastoquinol + NAD(+) + n H(+)(out). It carries out the reaction a plastoquinone + NADPH + (n+1) H(+)(in) = a plastoquinol + NADP(+) + n H(+)(out). NDH-1 shuttles electrons from an unknown electron donor, via FMN and iron-sulfur (Fe-S) centers, to quinones in the respiratory and/or the photosynthetic chain. The immediate electron acceptor for the enzyme in this species is believed to be plastoquinone. Couples the redox reaction to proton translocation, and thus conserves the redox energy in a proton gradient. Cyanobacterial NDH-1 also plays a role in inorganic carbon-concentration. The protein is NAD(P)H-quinone oxidoreductase subunit M of Acaryochloris marina (strain MBIC 11017).